The sequence spans 1008 residues: MLLVLDLGISSLVLVVSLVLPLIGLFVRHKWRVAAQRREEIRRLLIHASEEAARAELEASVEFSSVAVSNVFHCPVCYCLATTRCSRCKAVRYCSGKCQIIHWRQGHKDECHPASIVYDSEDESDSDLRLGEENGQNTPEETLLVGPEPVTIPIGESLLSNRARSPEDGNGDIADNKDDLIDKEEAVSVAETSGSSFSGFSSSPRNDSGDEISRCESFSSSESERSESLLDAHVSVEPEDTCFSTIEDAPSKLLSPKFVHLVESVDNLANLPKLSVHKPEDDAGQNQSQSRSLHSLVTDRHPVSADPSLKSSDFWGTALGSAERVSDSCVKSKSGRPGNSSLHFSFGSGSSRDTSAAKVSEQRSSILKEAPRGTGYISDGVNLRERNAKRFDEAEIALPISSSTDALSPLDSSNLSHVTLPKSKSASSENGSMLAPLKVGEVQLLASKASNTKKCADLMKHSPLGAKSVRVLDHQKQNGAVVQHINSLHGRSGLKASVLKVVDQWTRPKSENEMAGRHGHKGLFPYEVFAKLYTYKIEFQPCGLINVGNSCFANVVFQCLMFTPPLTTYFLQQFHSRACTKKEQCFTCGFEKLVVKAKEEKSPLSPNGLLSQLQNIGIFLGNGKEEDAHEFLRFVVDTMQSVCIKASEYDMTKSSKLEDTTLIGLTFGGYLRSKIKCMKCQVKSELREKMMDLTVEIDGDISTLDDALRRFTRTEILDGENKYRCGSCKSYERAKKKLKITEPPNVLTIALKRFQAGKFGKLNKLIRFPETLDLAPYVSGGSEKSHDYKLYGVIVHLDVMNAAFSGHYVCYIRNQNKWYKADDSTVVTSDVERILTKGAYMLFYARCTPTPPRLAVCTKTEASNKKSRVPLPKANEKSTISRSVSTSSPELSSNTPGGGRSGNIQSFYSSFQRLQKILEEDSASDSSSLFDSNSDECSCSTDSTSMDDFADFIFGDHQGRAHGQSETPSPTSSSSSSSPPFTRRSPLSRSSPETYGTSRHQLPLGGER.

Residues 7–27 (LGISSLVLVVSLVLPLIGLFV) traverse the membrane as a helical segment. Positions 74, 77, 85, 88, 94, 98, 107, and 111 each coordinate Zn(2+). Residues 74–111 (CPVCYCLATTRCSRCKAVRYCSGKCQIIHWRQGHKDEC) form an MYND-type zinc finger. Disordered stretches follow at residues 122 to 149 (DESD…GPEP), 159 to 178 (LSNR…DNKD), 187 to 233 (VSVA…LDAH), 275 to 309 (SVHK…DPSL), and 326 to 379 (SDSC…YISD). Residues 193-203 (SGSSFSGFSSS) show a composition bias toward low complexity. Basic and acidic residues predominate over residues 222 to 233 (ESERSESLLDAH). Residues 284–295 (GQNQSQSRSLHS) are compositionally biased toward polar residues. The span at 340-351 (SSLHFSFGSGSS) shows a compositional bias: low complexity. Residues 542–847 (CGLINVGNSC…GAYMLFYARC (306 aa)) form the USP domain. Cysteine 551 acts as the Nucleophile in catalysis. The active-site Proton acceptor is the histidine 807. Disordered regions lie at residues 859–905 (KTEA…GNIQ) and 952–1008 (FIFG…GGER). Composition is skewed to low complexity over residues 878 to 888 (STISRSVSTSS) and 965 to 992 (SETP…RSSP).

The protein belongs to the peptidase C19 family. Interacts with SHM1 and SHM4. Interacts with HIPP27. In terms of tissue distribution, expressed in flowers, siliques, rosette leaves, cauline leaves, stems and at a lower level in roots. In roots, expressed in the sieve elements.

Its subcellular location is the membrane. It carries out the reaction Thiol-dependent hydrolysis of ester, thioester, amide, peptide and isopeptide bonds formed by the C-terminal Gly of ubiquitin (a 76-residue protein attached to proteins as an intracellular targeting signal).. Recognizes and hydrolyzes the peptide bond at the C-terminal Gly of ubiquitin. Involved in the processing of poly-ubiquitin precursors as well as that of ubiquitinated proteins. Involved in salt tolerance by modulating sodium transport activity and repressing cell death at least partially through modulating SHM1 stability and activity. Involved in cadmium tolerance by interacting with HIPP27 and probably modulating its stability. The chain is Ubiquitin carboxyl-terminal hydrolase 16 (UBP16) from Arabidopsis thaliana (Mouse-ear cress).